Reading from the N-terminus, the 447-residue chain is Acyl-CoA (8-3)-desaturase (447 aa).

Position 1 is an N-acetylmethionine (Met1). The Cytoplasmic segment spans residues 1-124 (MAPDPVPTPG…FRELRATVER (124 aa)). One can recognise a Cytochrome b5 heme-binding domain in the interval 19–97 (TRYFTWEEVA…MNSLLIGELA (79 aa)). The chain crosses the membrane as a helical span at residues 125 to 145 (MGLMKANHLFFLVYLLHILLL). At 146 to 160 (DVAAWLTLWIFGTSL) the chain is on the lumenal side. Residues 161–180 (VPFILCAVLLSTVQAQAGWL) traverse the membrane as a helical segment. Over 181 to 268 (QHDFGHLSVF…HMPYNHQHKY (88 aa)) the chain is Cytoplasmic. The short motif at 182 to 186 (HDFGH) is the Histidine box-1 element. The Histidine box-2 motif lies at 219–223 (HFQHH). A helical transmembrane segment spans residues 269-289 (FFLIGPPALLPLYFQWYIFYF). The Lumenal portion of the chain corresponds to 290–308 (VVQRKKWVDLAWMLSFYAR). A helical membrane pass occupies residues 309–329 (IFFTYMPLLGLKGFLGLFFIV). The Cytoplasmic segment spans residues 330-447 (RFLESNWFVW…QLWLDAYLHQ (118 aa)). A Histidine box-3 motif is present at residues 385–389 (QIEHH).

Belongs to the fatty acid desaturase type 1 family. Highly expressed in the adrenal gland, liver, brain, and testis, tissues where lipogenesis and steroidogenesis are active. Expressed in colonic mucosa.

It is found in the endoplasmic reticulum membrane. It localises to the mitochondrion. The catalysed reaction is (8Z,11Z,14Z)-eicosatrienoyl-CoA + 2 Fe(II)-[cytochrome b5] + O2 + 2 H(+) = (5Z,8Z,11Z,14Z)-eicosatetraenoyl-CoA + 2 Fe(III)-[cytochrome b5] + 2 H2O. It carries out the reaction (8Z,11Z,14Z,17Z)-eicosatetraenoyl-CoA + 2 Fe(II)-[cytochrome b5] + O2 + 2 H(+) = (5Z,8Z,11Z,14Z,17Z)-eicosapentaenoyl-CoA + 2 Fe(III)-[cytochrome b5] + 2 H2O. The enzyme catalyses (11E)-octadecenoyl-CoA + 2 Fe(II)-[cytochrome b5] + O2 + 2 H(+) = (5Z,11E)-octadecadienoyl-CoA + 2 Fe(III)-[cytochrome b5] + 2 H2O. The protein operates within lipid metabolism; polyunsaturated fatty acid biosynthesis. In terms of biological role, acts as a front-end fatty acyl-coenzyme A (CoA) desaturase that introduces a cis double bond at carbon 5 located between a preexisting double bond and the carboxyl end of the fatty acyl chain. Involved in biosynthesis of highly unsaturated fatty acids (HUFA) from the essential polyunsaturated fatty acids (PUFA) linoleic acid (LA) (18:2n-6) and alpha-linolenic acid (ALA) (18:3n-3) precursors. Specifically, desaturates dihomo-gamma-linoleoate (DGLA) (20:3n-6) and eicosatetraenoate (ETA) (20:4n-3) to generate arachidonate (AA) (20:4n-6) and eicosapentaenoate (EPA) (20:5n-3), respectively. As a rate limiting enzyme for DGLA (20:3n-6) and AA (20:4n-6)-derived eicosanoid biosynthesis, controls the metabolism of inflammatory lipids like prostaglandin E2, critical for efficient acute inflammatory response and maintenance of epithelium homeostasis. Contributes to membrane phospholipid biosynthesis by providing AA (20:4n-6) as a major acyl chain esterified into phospholipids. In particular, regulates phosphatidylinositol-4,5-bisphosphate levels, modulating inflammatory cytokine production in T-cells. Also desaturates (11E)-octadecenoate (trans-vaccenoate)(18:1n-9), a metabolite in the biohydrogenation pathway of LA (18:2n-6). The protein is Acyl-CoA (8-3)-desaturase of Mus musculus (Mouse).